We begin with the raw amino-acid sequence, 315 residues long: Acetyl-coenzyme A carboxylase carboxyl transferase subunit alpha (315 aa).

Residues 40-293 form the CoA carboxyltransferase C-terminal domain; that stretch reads LQDKSKTLTE…RAELSSQLAM (254 aa).

It belongs to the AccA family. In terms of assembly, acetyl-CoA carboxylase is a heterohexamer composed of biotin carboxyl carrier protein (AccB), biotin carboxylase (AccC) and two subunits each of ACCase subunit alpha (AccA) and ACCase subunit beta (AccD).

Its subcellular location is the cytoplasm. The enzyme catalyses N(6)-carboxybiotinyl-L-lysyl-[protein] + acetyl-CoA = N(6)-biotinyl-L-lysyl-[protein] + malonyl-CoA. Its pathway is lipid metabolism; malonyl-CoA biosynthesis; malonyl-CoA from acetyl-CoA: step 1/1. Component of the acetyl coenzyme A carboxylase (ACC) complex. First, biotin carboxylase catalyzes the carboxylation of biotin on its carrier protein (BCCP) and then the CO(2) group is transferred by the carboxyltransferase to acetyl-CoA to form malonyl-CoA. This Pseudomonas fluorescens (strain Pf0-1) protein is Acetyl-coenzyme A carboxylase carboxyl transferase subunit alpha.